Here is a 218-residue protein sequence, read N- to C-terminus: Methylthioribulose-1-phosphate dehydratase (218 aa).

Residues His107 and His109 each contribute to the Zn(2+) site.

The protein belongs to the aldolase class II family. MtnB subfamily. The cofactor is Zn(2+).

It catalyses the reaction 5-(methylsulfanyl)-D-ribulose 1-phosphate = 5-methylsulfanyl-2,3-dioxopentyl phosphate + H2O. The protein operates within amino-acid biosynthesis; L-methionine biosynthesis via salvage pathway; L-methionine from S-methyl-5-thio-alpha-D-ribose 1-phosphate: step 2/6. Functionally, catalyzes the dehydration of methylthioribulose-1-phosphate (MTRu-1-P) into 2,3-diketo-5-methylthiopentyl-1-phosphate (DK-MTP-1-P). In Xylella fastidiosa (strain 9a5c), this protein is Methylthioribulose-1-phosphate dehydratase.